A 175-amino-acid polypeptide reads, in one-letter code: NADH-ubiquinone oxidoreductase chain 6 (175 aa).

The next 5 membrane-spanning stretches (helical) occupy residues 1–21, 25–45, 47–67, 88–108, and 149–169; these read MMLYIVFILSVIFVIGFVGFS, SPIYGGLGLIVSGGVGCGIVL, FGGSFLGLMVFLIYLGGMMVV, AVLGAFITALLMEFFMVYYVL, and YGTWLVIVTGWSLFIGVVVIM.

This sequence belongs to the complex I subunit 6 family. As to quaternary structure, core subunit of respiratory chain NADH dehydrogenase (Complex I) which is composed of 45 different subunits.

Its subcellular location is the mitochondrion inner membrane. It catalyses the reaction a ubiquinone + NADH + 5 H(+)(in) = a ubiquinol + NAD(+) + 4 H(+)(out). In terms of biological role, core subunit of the mitochondrial membrane respiratory chain NADH dehydrogenase (Complex I) which catalyzes electron transfer from NADH through the respiratory chain, using ubiquinone as an electron acceptor. Essential for the catalytic activity and assembly of complex I. The protein is NADH-ubiquinone oxidoreductase chain 6 (MT-ND6) of Bos mutus grunniens (Wild yak).